The sequence spans 272 residues: Phytolongin Phyl2.2 (272 aa).

In terms of domain architecture, Longin spans 12–116 (CIAKGTVVLA…LINPVSHCLQ (105 aa)). The chain crosses the membrane as a helical; Anchor for type IV membrane protein span at residues 243–263 (WVVLMFDFCICAVLFGIWLWI).

It belongs to the synaptobrevin family.

The protein resides in the membrane. Functionally, non-SNARE longin protein involved in membrane-trafficking machinery. In Arabidopsis thaliana (Mouse-ear cress), this protein is Phytolongin Phyl2.2.